The sequence spans 299 residues: Recombination-associated protein RdgC (299 aa).

This sequence belongs to the RdgC family.

It is found in the cytoplasm. Its subcellular location is the nucleoid. Its function is as follows. May be involved in recombination. This is Recombination-associated protein RdgC from Laribacter hongkongensis (strain HLHK9).